The following is a 540-amino-acid chain: GMP synthase [glutamine-hydrolyzing] (540 aa).

In terms of domain architecture, Glutamine amidotransferase type-1 spans 29 to 222 (KILIVDFGSQ…VRKVAGLTGD (194 aa)). Cysteine 106 (nucleophile) is an active-site residue. Active-site residues include histidine 196 and glutamate 198. Residues 223 to 415 (WTMRAFREEA…LGLPDVFVGR (193 aa)) enclose the GMPS ATP-PPase domain. 250-256 (SGGVDSA) provides a ligand contact to ATP.

Homodimer.

The catalysed reaction is XMP + L-glutamine + ATP + H2O = GMP + L-glutamate + AMP + diphosphate + 2 H(+). The protein operates within purine metabolism; GMP biosynthesis; GMP from XMP (L-Gln route): step 1/1. Functionally, catalyzes the synthesis of GMP from XMP. This Rhodopseudomonas palustris (strain ATCC BAA-98 / CGA009) protein is GMP synthase [glutamine-hydrolyzing].